The following is a 381-amino-acid chain: Tryptophan--tRNA ligase (381 aa).

A 'HIGH' region motif is present at residues 82–90 (PSLGMHIGH). Residues 254–258 (KMSSS) carry the 'KMSKS' region motif.

This sequence belongs to the class-I aminoacyl-tRNA synthetase family.

The protein resides in the cytoplasm. The catalysed reaction is tRNA(Trp) + L-tryptophan + ATP = L-tryptophyl-tRNA(Trp) + AMP + diphosphate + H(+). The protein is Tryptophan--tRNA ligase of Sulfolobus acidocaldarius (strain ATCC 33909 / DSM 639 / JCM 8929 / NBRC 15157 / NCIMB 11770).